A 268-amino-acid polypeptide reads, in one-letter code: MVNTETYTERASKHPSKVAQRLFQLMESKKTNLCASIDVPTTKEFLSLIDKLGPFICLVKTHIDIISDFSYEGTILPLIELSKKHNFMIFEDRKFADIGNTVKLQYTSGVYKISSWSDITNAHGVTGKGGVEGLKKGADETTNEPRGLLMLAELSSKGSLAYGEYTNKTIEIAKSDKEFVIGFIAQRDMGGHDQGFDWIIMTPGVGLDDKGDALGQQYRTVDEVISTGTDVIIVGRGLFGKGRDPEVEGKRYREAGWNAYLKKNGQLE.

Substrate-binding positions include Asp38, 60-62 (KTH), 92-101 (DRKFADIGNT), Tyr218, and Arg236. Lys94 serves as the catalytic Proton donor.

It belongs to the OMP decarboxylase family.

It carries out the reaction orotidine 5'-phosphate + H(+) = UMP + CO2. It functions in the pathway pyrimidine metabolism; UMP biosynthesis via de novo pathway; UMP from orotate: step 2/2. In Candida tropicalis (Yeast), this protein is Orotidine 5'-phosphate decarboxylase (URA3).